A 422-amino-acid chain; its full sequence is Serine hydroxymethyltransferase (422 aa).

120-122 (GHI) serves as a coordination point for (6S)-5,6,7,8-tetrahydrofolate. At Lys-226 the chain carries N6-(pyridoxal phosphate)lysine. Glu-241 is a binding site for (6S)-5,6,7,8-tetrahydrofolate.

Belongs to the SHMT family. Homodimer. Pyridoxal 5'-phosphate is required as a cofactor.

The protein resides in the cytoplasm. The enzyme catalyses 5,10-methylenetetrahydromethanopterin + glycine + H2O = 5,6,7,8-tetrahydromethanopterin + L-serine. Its pathway is amino-acid biosynthesis; glycine biosynthesis; glycine from L-serine: step 1/1. Functionally, catalyzes the reversible interconversion of serine and glycine with tetrahydromethanopterin (H4MPT) serving as the one-carbon carrier. Also exhibits a pteridine-independent aldolase activity toward beta-hydroxyamino acids, producing glycine and aldehydes, via a retro-aldol mechanism. This chain is Serine hydroxymethyltransferase, found in Methanosphaera stadtmanae (strain ATCC 43021 / DSM 3091 / JCM 11832 / MCB-3).